The primary structure comprises 264 residues: uncharacterized protein (264 aa).

2 disordered regions span residues 1–52 and 123–207; these read MPRS…AVPG and GGRW…PWTR. The segment covering 29 to 40 has biased composition (low complexity); the sequence is AAHPTTSPTAAS. Residues 144-154 show a composition bias toward polar residues; it reads HFQSSGAQQES. Residues 188–197 show a composition bias toward basic residues; it reads ARKSACKCPR.

This is an uncharacterized protein from Homo sapiens (Human).